Reading from the N-terminus, the 146-residue chain is ATP synthase F(0) complex subunit C2, mitochondrial (146 aa).

The transit peptide at 1–71 (MYACSKFVST…RSFQTSAISR (71 aa)) directs the protein to the mitochondrion. A helical transmembrane segment spans residues 87-107 (VGVAGSGAGIGTVFGSLIIGY). Lysine 114 bears the N6,N6,N6-trimethyllysine mark. A helical membrane pass occupies residues 122-142 (ILGFALSEAMGLFCLMVAFLI).

Belongs to the ATPase C chain family. In terms of assembly, F-type ATPases have 2 components, CF(1) - the catalytic core - and CF(0) - the membrane proton channel. CF(1) has five subunits: alpha(3), beta(3), gamma(1), delta(1), epsilon(1). CF(0) has three main subunits: a, b and c. Interacts with DNAJC30; interaction is direct. Post-translationally, trimethylated by ATPSCKMT at Lys-114. Methylation is required for proper incorporation of the C subunit into the ATP synthase complex and mitochondrial respiration.

It localises to the mitochondrion membrane. Mitochondrial membrane ATP synthase (F(1)F(0) ATP synthase or Complex V) produces ATP from ADP in the presence of a proton gradient across the membrane which is generated by electron transport complexes of the respiratory chain. F-type ATPases consist of two structural domains, F(1) - containing the extramembraneous catalytic core and F(0) - containing the membrane proton channel, linked together by a central stalk and a peripheral stalk. During catalysis, ATP synthesis in the catalytic domain of F(1) is coupled via a rotary mechanism of the central stalk subunits to proton translocation. Part of the complex F(0) domain. A homomeric c-ring of probably 10 subunits is part of the complex rotary element. The polypeptide is ATP synthase F(0) complex subunit C2, mitochondrial (Mus musculus (Mouse)).